Here is a 248-residue protein sequence, read N- to C-terminus: 3-deoxy-manno-octulosonate cytidylyltransferase (248 aa).

The protein belongs to the KdsB family.

The protein resides in the cytoplasm. The catalysed reaction is 3-deoxy-alpha-D-manno-oct-2-ulosonate + CTP = CMP-3-deoxy-beta-D-manno-octulosonate + diphosphate. Its pathway is nucleotide-sugar biosynthesis; CMP-3-deoxy-D-manno-octulosonate biosynthesis; CMP-3-deoxy-D-manno-octulosonate from 3-deoxy-D-manno-octulosonate and CTP: step 1/1. The protein operates within bacterial outer membrane biogenesis; lipopolysaccharide biosynthesis. In terms of biological role, activates KDO (a required 8-carbon sugar) for incorporation into bacterial lipopolysaccharide in Gram-negative bacteria. The chain is 3-deoxy-manno-octulosonate cytidylyltransferase from Cronobacter sakazakii (strain ATCC BAA-894) (Enterobacter sakazakii).